A 148-amino-acid polypeptide reads, in one-letter code: Lysozyme-like protein 1 (148 aa).

Residues 1 to 19 (MKSVGVFALIISFSIVAES) form the signal peptide. In terms of domain architecture, C-type lysozyme spans 20 to 148 (KIYTRCKLAK…SEWKRGCEVS (129 aa)). 4 cysteine pairs are disulfide-bonded: C25–C145, C49–C133, C83–C98, and C94–C112. The active site involves E54. N58 carries an N-linked (GlcNAc...) asparagine glycan. D71 is a catalytic residue.

This sequence belongs to the glycosyl hydrolase 22 family. In terms of assembly, monomer.

Its subcellular location is the secreted. It carries out the reaction Hydrolysis of (1-&gt;4)-beta-linkages between N-acetylmuramic acid and N-acetyl-D-glucosamine residues in a peptidoglycan and between N-acetyl-D-glucosamine residues in chitodextrins.. This is Lysozyme-like protein 1 (Lyzl1) from Mus musculus (Mouse).